We begin with the raw amino-acid sequence, 491 residues long: Allene oxide synthase 3 (491 aa).

Lys104, His135, and Lys139 together coordinate heme b. (13S)-hydroperoxy-(9Z,11E)-octadecadienoate-binding residues include Asn296 and Lys302. A (13S)-hydroperoxy-(9Z,11E,15Z)-octadecatrienoate-binding site is contributed by Asn296. Residues Lys442 and Cys444 each contribute to the heme b site.

It belongs to the cytochrome P450 family. Heme b is required as a cofactor. In terms of tissue distribution, expressed in roots. Not detected in aerial tissues, including cotyledons, leaves, stems and flower buds.

The catalysed reaction is (13S)-hydroperoxy-(9Z,11E,15Z)-octadecatrienoate = (9Z,13S,15Z)-12,13-epoxyoctadeca-9,11,15-trienoate + H2O. It carries out the reaction (13S)-hydroperoxy-(9Z,11E)-octadecadienoate = (9Z,13S)-12,13-epoxyoctadeca-9,11-dienoate + H2O. The enzyme catalyses (9Z,13S,15Z)-12,13-epoxyoctadeca-9,11,15-trienoate = (9S,13S,15Z)-12-oxophyto-10,15-dienoate. In terms of biological role, cytochrome P450 metabolizing both 13- and 9-hydroperoxides of linoleic and linolenic acids, but with a marked preference for 9-hydroperoxy fatty acids. Catalyzes not only the synthesis of allene oxide, but also its hydrolysis and cyclization. The first step is the synthesis of (12Z)-9,10-epoxyoctadeca-10,12-dienoic acid (9,10-EOD) and the final products are (9R)-alpha-ketol and the racemic cis-10-oxo-11-phytoenoic acid. The cyclase activity possesses regiospecificity and (9Z)-12,13-epoxyoctadeca-9,11-dienoic acid (12,13-EOD) is significantly less efficient as a substrate for cyclopentenone production than 9,10-EOD. Has no hydroperoxide lyase activity. May play a defensive role against soil-borne pests that affect roots or juvenile tissues as they emerge from the germinating seed. The polypeptide is Allene oxide synthase 3 (Solanum lycopersicum (Tomato)).